The chain runs to 529 residues: MTRSPALLLLLLGALPSAEAARGPPRMADKVVPRQVARLGRTVRLQCPVEGDPPPLTMWTKDGRTIHSGWSRFRVLPQGLKVKEVEAEDAGVYVCKATNGFGSLSVNYTLIIMDDISPGKESPGPGGSSGGQEDPASQQWARPRFTQPSKMRRRVIARPVGSSVRLKCVASGHPRPDIMWMKDDQTLTHLEASEHRKKKWTLSLKNLKPEDSGKYTCRVSNKAGAINATYKVDVIQRTRSKPVLTGTHPVNTTVDFGGTTSFQCKVRSDVKPVIQWLKRVEYGSEGRHNSTIDVGGQKFVVLPTGDVWSRPDGSYLNKLLISRARQDDAGMYICLGANTMGYSFRSAFLTVLPDPKPPGPPMASSSSSTSLPWPVVIGIPAGAVFILGTVLLWLCQTKKKPCAPASTLPVPGHRPPGTSRERSGDKDLPSLAVGICEEHGSAMAPQHILASGSTAGPKLYPKLYTDVHTHTHTHTCTHTLSCGGQGSSTPACPLSVLNTANLQALCPEVGIWGPRQQVGRIENNGGRVS.

Positions 1–20 (MTRSPALLLLLLGALPSAEA) are cleaved as a signal peptide. Residues 21 to 374 (ARGPPRMADK…SSSSTSLPWP (354 aa)) are Extracellular-facing. 3 Ig-like C2-type domains span residues 25-111 (PRMA…YTLI), 143-233 (PRFT…YKVD), and 242-350 (PVLT…AFLT). Residues cysteine 47 and cysteine 95 are joined by a disulfide bond. Residue asparagine 107 is glycosylated (N-linked (GlcNAc...) asparagine). The interval 116-151 (ISPGKESPGPGGSSGGQEDPASQQWARPRFTQPSKM) is disordered. Cysteines 168 and 217 form a disulfide. N-linked (GlcNAc...) asparagine glycans are attached at residues asparagine 227, asparagine 251, and asparagine 289. Cysteines 264 and 334 form a disulfide. Residues 375 to 395 (VVIGIPAGAVFILGTVLLWLC) traverse the membrane as a helical segment. Residues 396–529 (QTKKKPCAPA…RIENNGGRVS (134 aa)) are Cytoplasmic-facing. The disordered stretch occupies residues 405 to 427 (ASTLPVPGHRPPGTSRERSGDKD).

In terms of assembly, interacts with FGF2 with a low affinity. Highly expressed in the kidney, brain and lung. Weakly expressed in the muscle, thymus, lymph node, stomach, intestine, colon and liver. Expressed in fetal cartilaginous structures like the nasal cartilage, the ribs and the sternum as well as in the cartilaginous rudiments of developing bones such as the vertebrae and the pelvic bone. High expression is found in the muscles of the tongue and the diaphragm.

The protein localises to the cell membrane. Has a negative effect on cell proliferation. This Mus musculus (Mouse) protein is Fibroblast growth factor receptor-like 1 (Fgfrl1).